The chain runs to 332 residues: Tetraacyldisaccharide 4'-kinase (332 aa).

ATP is bound at residue Thr-58–Thr-65.

Belongs to the LpxK family.

It carries out the reaction a lipid A disaccharide + ATP = a lipid IVA + ADP + H(+). It participates in glycolipid biosynthesis; lipid IV(A) biosynthesis; lipid IV(A) from (3R)-3-hydroxytetradecanoyl-[acyl-carrier-protein] and UDP-N-acetyl-alpha-D-glucosamine: step 6/6. Its function is as follows. Transfers the gamma-phosphate of ATP to the 4'-position of a tetraacyldisaccharide 1-phosphate intermediate (termed DS-1-P) to form tetraacyldisaccharide 1,4'-bis-phosphate (lipid IVA). The polypeptide is Tetraacyldisaccharide 4'-kinase (Shewanella piezotolerans (strain WP3 / JCM 13877)).